The primary structure comprises 542 residues: Chaperonin GroEL 2 (542 aa).

ATP-binding positions include 30-33 (TLGP), Lys-51, 87-91 (DGTTT), Gly-415, and Asp-496.

It belongs to the chaperonin (HSP60) family. As to quaternary structure, forms a cylinder of 14 subunits composed of two heptameric rings stacked back-to-back. Interacts with the co-chaperonin GroES.

It localises to the cytoplasm. The enzyme catalyses ATP + H2O + a folded polypeptide = ADP + phosphate + an unfolded polypeptide.. Functionally, together with its co-chaperonin GroES, plays an essential role in assisting protein folding. The GroEL-GroES system forms a nano-cage that allows encapsulation of the non-native substrate proteins and provides a physical environment optimized to promote and accelerate protein folding. This Sinorhizobium fredii (strain NBRC 101917 / NGR234) protein is Chaperonin GroEL 2.